Reading from the N-terminus, the 298-residue chain is Cobalt-precorrin-5B C(1)-methyltransferase (298 aa).

It belongs to the CbiD family.

The catalysed reaction is Co-precorrin-5B + S-adenosyl-L-methionine = Co-precorrin-6A + S-adenosyl-L-homocysteine. It participates in cofactor biosynthesis; adenosylcobalamin biosynthesis; cob(II)yrinate a,c-diamide from sirohydrochlorin (anaerobic route): step 6/10. Its function is as follows. Catalyzes the methylation of C-1 in cobalt-precorrin-5B to form cobalt-precorrin-6A. The sequence is that of Cobalt-precorrin-5B C(1)-methyltransferase from Archaeoglobus fulgidus (strain ATCC 49558 / DSM 4304 / JCM 9628 / NBRC 100126 / VC-16).